The chain runs to 215 residues: Chloramphenicol acetyltransferase (215 aa).

His189 (proton acceptor) is an active-site residue.

It belongs to the chloramphenicol acetyltransferase family. Homotrimer.

It carries out the reaction chloramphenicol + acetyl-CoA = chloramphenicol 3-acetate + CoA. Its function is as follows. This enzyme is an effector of chloramphenicol resistance in bacteria. The chain is Chloramphenicol acetyltransferase (cat) from Staphylococcus aureus.